The sequence spans 351 residues: Thiamine-phosphate synthase (351 aa).

The interval 1–128 (MLNSNTKDHE…SKIASEIRYE (128 aa)) is unknown. The segment at 129–351 (IYTVEIDLLS…MILKELSHEN (223 aa)) is thiamine-phosphate synthase. 4-amino-2-methyl-5-(diphosphooxymethyl)pyrimidine is bound by residues 180 to 184 (QHRFK) and N212. D213 and D232 together coordinate Mg(2+). S251 serves as a coordination point for 4-amino-2-methyl-5-(diphosphooxymethyl)pyrimidine. 277-279 (TTT) is a 2-[(2R,5Z)-2-carboxy-4-methylthiazol-5(2H)-ylidene]ethyl phosphate binding site. Residue K280 coordinates 4-amino-2-methyl-5-(diphosphooxymethyl)pyrimidine. A 2-[(2R,5Z)-2-carboxy-4-methylthiazol-5(2H)-ylidene]ethyl phosphate-binding site is contributed by G307.

Belongs to the thiamine-phosphate synthase family. It depends on Mg(2+) as a cofactor.

It catalyses the reaction 2-[(2R,5Z)-2-carboxy-4-methylthiazol-5(2H)-ylidene]ethyl phosphate + 4-amino-2-methyl-5-(diphosphooxymethyl)pyrimidine + 2 H(+) = thiamine phosphate + CO2 + diphosphate. The enzyme catalyses 2-(2-carboxy-4-methylthiazol-5-yl)ethyl phosphate + 4-amino-2-methyl-5-(diphosphooxymethyl)pyrimidine + 2 H(+) = thiamine phosphate + CO2 + diphosphate. It carries out the reaction 4-methyl-5-(2-phosphooxyethyl)-thiazole + 4-amino-2-methyl-5-(diphosphooxymethyl)pyrimidine + H(+) = thiamine phosphate + diphosphate. Its pathway is cofactor biosynthesis; thiamine diphosphate biosynthesis; thiamine phosphate from 4-amino-2-methyl-5-diphosphomethylpyrimidine and 4-methyl-5-(2-phosphoethyl)-thiazole: step 1/1. Functionally, condenses 4-methyl-5-(beta-hydroxyethyl)thiazole monophosphate (THZ-P) and 2-methyl-4-amino-5-hydroxymethyl pyrimidine pyrophosphate (HMP-PP) to form thiamine monophosphate (TMP). This chain is Thiamine-phosphate synthase, found in Prochlorococcus marinus (strain AS9601).